The primary structure comprises 523 residues: UDP-glucuronosyltransferase 2B16 (523 aa).

Positions 1-16 (LLLLLQLSCCFSSGSC) are cleaved as a signal peptide. Lysine 129 carries the post-translational modification N6-succinyllysine. Residue asparagine 309 is glycosylated (N-linked (GlcNAc...) asparagine). A helical membrane pass occupies residues 487–503 (VIGFLLACLTITTYLVI).

The protein belongs to the UDP-glycosyltransferase family.

The protein resides in the microsome membrane. It is found in the endoplasmic reticulum membrane. The catalysed reaction is glucuronate acceptor + UDP-alpha-D-glucuronate = acceptor beta-D-glucuronoside + UDP + H(+). Its function is as follows. UDPGT is of major importance in the conjugation and subsequent elimination of potentially toxic xenobiotics and endogenous compounds. Acts on small phenolic agents such as 2-beta-naphthol and 4-methylumbelliferone as well as bulky phenolic compounds like 2-hydroxy- and 4-hydroxybiphenyl. In contrast to 2B13 it is active toward 4-hydroxyesterone. The protein is UDP-glucuronosyltransferase 2B16 (UGT2B16) of Oryctolagus cuniculus (Rabbit).